The chain runs to 797 residues: EFPKYDSITELDVYCNQNNKSDVQMYNFITKLESEYGNITVTVYKGSKTISNDKSILNECELYFVFNIGSNKRVVCLADNKTWDQSLKYWNSSKYPYPRWCDEYLTESEFVRSIGEYKFHVNNGTVKYWEKYYNFPDMVFNYSDKKHDLRIGSLDLETYGDNCFELGLGNLNVYAGGFALNDGFKKLYYLNNDTELNSGEAIIKKMFGDLFDYIAEDRKARNNYTIYAHNLGRFDSVFIIRSLCSEGYKINGQWIDNSILYLKIVDSTRKLTIKLRDSIKLVPHSLDKALSSNGCNISKGMFPHKFVNKDTLNYIGDKPDIKYYVDENKFNESKLKKYKSLPSILNLKKECLNYLDKDILGLLELMNKVSLTYFNEYKLNITKFSTLPSITLNIFGIRFYDDQNSIKMINGPLSEFIRSSYFGGNSDIFVSGEERLVKNGYHYDMNSQYPYAMLQSMPTGNPVFSTNTDLNYYRNGFVFARVTPPSKDTLVNLFIPRRSDDGSVICDRNTFYEFIPTPDLKQGLEYGYKFEVICGINFPDACGNGELFSEFVNHFYEIKSSSTDLGQKYIAKLSLNSLYGKFGQKEREYSIRLLEKDKAKEIISKNHYSYMSEVSDNYTLIKSGGRLNSKLRRLYAEQARINTINDDLLSSKFIKSRGIPSAVQISAMISSYARTSINPFKNIPGNLAIASNTDSLILRKPLEDHLIGKEIGKWKLEHKFKNGVFVKPKLYCYEDVDINELIRKASGVTASNLTYENFVELVNGKDVLTNKELFRLNWETLNIEIVNINTKISGIKE.

The protein belongs to the DNA polymerase type-B family.

The protein localises to the mitochondrion. The catalysed reaction is DNA(n) + a 2'-deoxyribonucleoside 5'-triphosphate = DNA(n+1) + diphosphate. The chain is Probable DNA polymerase from Agaricus bitorquis (Pavement mushroom).